A 505-amino-acid polypeptide reads, in one-letter code: Catalase (505 aa).

Residues Met1–Ala25 form a disordered region. Catalysis depends on residues His56 and Asn129. Tyr339 contacts heme.

This sequence belongs to the catalase family. In terms of assembly, homodimer. It depends on heme as a cofactor.

It catalyses the reaction 2 H2O2 = O2 + 2 H2O. Decomposes hydrogen peroxide into water and oxygen; serves to protect cells from the toxic effects of hydrogen peroxide. The chain is Catalase (katA) from Staphylococcus warneri.